The sequence spans 175 residues: 3-hydroxydecanoyl-[acyl-carrier-protein] dehydratase (175 aa).

His71 is a catalytic residue.

It belongs to the thioester dehydratase family. FabA subfamily. In terms of assembly, homodimer.

The protein localises to the cytoplasm. It carries out the reaction a (3R)-hydroxyacyl-[ACP] = a (2E)-enoyl-[ACP] + H2O. The enzyme catalyses (3R)-hydroxydecanoyl-[ACP] = (2E)-decenoyl-[ACP] + H2O. It catalyses the reaction (2E)-decenoyl-[ACP] = (3Z)-decenoyl-[ACP]. The protein operates within lipid metabolism; fatty acid biosynthesis. Functionally, necessary for the introduction of cis unsaturation into fatty acids. Catalyzes the dehydration of (3R)-3-hydroxydecanoyl-ACP to E-(2)-decenoyl-ACP and then its isomerization to Z-(3)-decenoyl-ACP. Can catalyze the dehydratase reaction for beta-hydroxyacyl-ACPs with saturated chain lengths up to 16:0, being most active on intermediate chain length. This Rhodopseudomonas palustris (strain BisB5) protein is 3-hydroxydecanoyl-[acyl-carrier-protein] dehydratase.